The chain runs to 250 residues: AA9 family lytic polysaccharide monooxygenase F (250 aa).

Residues 1–21 form the signal peptide; the sequence is MAMSKIATLAGLLASAGLVAG. Histidine 22 contributes to the Cu(2+) binding site. Aspartate 51 provides a ligand contact to O2. 2 cysteine pairs are disulfide-bonded: cysteine 77–cysteine 200 and cysteine 121–cysteine 125. Residue histidine 107 participates in Cu(2+) binding. 2 residues coordinate O2: histidine 186 and glutamine 195. Cu(2+) is bound at residue tyrosine 197.

Belongs to the glycosyl hydrolase 61 family. Requires Cu(2+) as cofactor.

The protein resides in the secreted. It catalyses the reaction Endohydrolysis of (1-&gt;4)-beta-D-glucosidic linkages in cellulose, lichenin and cereal beta-D-glucans.. In terms of biological role, lytic polysaccharide monooxygenase (LMPO) that depolymerizes crystalline and amorphous polysaccharides via the oxidation of scissile alpha- or beta-(1-4)-glycosidic bonds, yielding C1 or C4 oxidation products. Catalysis by LPMOs requires the reduction of the active-site copper from Cu(II) to Cu(I) by a reducing agent and H(2)O(2) or O(2) as a cosubstrate. Major secreted component of the extracellular cellulolytic system. The sequence is that of AA9 family lytic polysaccharide monooxygenase F from Emericella nidulans (strain FGSC A4 / ATCC 38163 / CBS 112.46 / NRRL 194 / M139) (Aspergillus nidulans).